The sequence spans 392 residues: Formate-dependent phosphoribosylglycinamide formyltransferase (392 aa).

Residues Glu15–Leu16 and Glu75 contribute to the N(1)-(5-phospho-beta-D-ribosyl)glycinamide site. Residues Arg107, Lys148, Ser153–Gln158, Glu188–Leu191, and Glu196 contribute to the ATP site. The region spanning Asp112–Leu302 is the ATP-grasp domain. Residues Glu261 and Glu273 each coordinate Mg(2+). N(1)-(5-phospho-beta-D-ribosyl)glycinamide-binding positions include Asp280, Lys350, and Arg357–Arg358.

Belongs to the PurK/PurT family. Homodimer.

It carries out the reaction N(1)-(5-phospho-beta-D-ribosyl)glycinamide + formate + ATP = N(2)-formyl-N(1)-(5-phospho-beta-D-ribosyl)glycinamide + ADP + phosphate + H(+). It functions in the pathway purine metabolism; IMP biosynthesis via de novo pathway; N(2)-formyl-N(1)-(5-phospho-D-ribosyl)glycinamide from N(1)-(5-phospho-D-ribosyl)glycinamide (formate route): step 1/1. In terms of biological role, involved in the de novo purine biosynthesis. Catalyzes the transfer of formate to 5-phospho-ribosyl-glycinamide (GAR), producing 5-phospho-ribosyl-N-formylglycinamide (FGAR). Formate is provided by PurU via hydrolysis of 10-formyl-tetrahydrofolate. This Synechococcus sp. (strain CC9605) protein is Formate-dependent phosphoribosylglycinamide formyltransferase.